Reading from the N-terminus, the 208-residue chain is N-(5'-phosphoribosyl)anthranilate isomerase (208 aa).

This sequence belongs to the TrpF family.

The enzyme catalyses N-(5-phospho-beta-D-ribosyl)anthranilate = 1-(2-carboxyphenylamino)-1-deoxy-D-ribulose 5-phosphate. It participates in amino-acid biosynthesis; L-tryptophan biosynthesis; L-tryptophan from chorismate: step 3/5. The sequence is that of N-(5'-phosphoribosyl)anthranilate isomerase from Lactiplantibacillus plantarum (strain ATCC BAA-793 / NCIMB 8826 / WCFS1) (Lactobacillus plantarum).